We begin with the raw amino-acid sequence, 422 residues long: Carboxypeptidase B2 (422 aa).

Residues 1-21 (MKLYGLGVLVAIILYEKHGLA) form the signal peptide. Positions 22 to 113 (FQSGHVLSAL…QTSNDTVSPR (92 aa)) are cleaved as a propeptide — activation peptide. Residues asparagine 43, asparagine 72, asparagine 84, and asparagine 107 are each glycosylated (N-linked (GlcNAc...) asparagine). The Peptidase M14 domain maps to 121-418 (QYHSLNEIYS…AAVSKIAWHV (298 aa)). Residues cysteine 177 and cysteine 190 are joined by a disulfide bond. Positions 180 and 183 each coordinate Zn(2+). Substrate contacts are provided by residues 180–183 (HARE) and arginine 238. Asparagine 240 is a glycosylation site (N-linked (GlcNAc...) asparagine). 2 cysteine pairs are disulfide-bonded: cysteine 249/cysteine 273 and cysteine 264/cysteine 278. Position 255-256 (255-256 (NR)) interacts with substrate. Residue histidine 309 participates in Zn(2+) binding. A substrate-binding site is contributed by 310 to 311 (SY). N-linked (GlcNAc...) asparagine glycosylation occurs at asparagine 322. Tyrosine 362 contributes to the substrate binding site. The active-site Proton donor/acceptor is glutamate 384.

Belongs to the peptidase M14 family. Zn(2+) serves as cofactor. Plasma; synthesized in the liver.

The protein localises to the secreted. The enzyme catalyses Release of C-terminal Arg and Lys from a polypeptide.. Its activity is regulated as follows. TAFI/CPB2 is unique among carboxypeptidases in that it spontaneously inactivates with a short half-life, a property that is crucial for its role in controlling blood clot lysis. The zymogen is stabilized by interactions with the activation peptide. Release of the activation peptide increases a dynamic flap mobility and in time this leads to conformational changes that disrupt the catalytic site and expose a cryptic thrombin-cleavage site present at Arg-323. Cleaves C-terminal arginine or lysine residues from biologically active peptides such as kinins or anaphylatoxins in the circulation thereby regulating their activities. Down-regulates fibrinolysis by removing C-terminal lysine residues from fibrin that has already been partially degraded by plasmin. This is Carboxypeptidase B2 (Cpb2) from Rattus norvegicus (Rat).